The primary structure comprises 37 residues: Large ribosomal subunit protein bL36 (37 aa).

The protein belongs to the bacterial ribosomal protein bL36 family.

In Endomicrobium trichonymphae, this protein is Large ribosomal subunit protein bL36.